A 262-amino-acid polypeptide reads, in one-letter code: Putative phosphatase HI_0003 (262 aa).

Aspartate 9 acts as the Nucleophile in catalysis. Mg(2+) contacts are provided by aspartate 9 and asparagine 11. Residues 43 to 44 and lysine 189 each bind phosphate; that span reads SA. Aspartate 212 lines the Mg(2+) pocket. Position 215 (asparagine 215) interacts with phosphate.

The protein belongs to the HAD-like hydrolase superfamily. Cof family. Mg(2+) is required as a cofactor.

The protein is Putative phosphatase HI_0003 of Haemophilus influenzae (strain ATCC 51907 / DSM 11121 / KW20 / Rd).